The primary structure comprises 389 residues: Sedoheptulose-1,7-bisphosphatase, chloroplastic (389 aa).

Cysteines 115 and 120 form a disulfide. Residues Asp-126, Glu-155, Asp-173, Leu-175, and Asp-176 each coordinate Mg(2+). Residues 176–179 (DGSS), Tyr-287, and Lys-317 contribute to the substrate site. Glu-323 provides a ligand contact to Mg(2+).

This sequence belongs to the FBPase class 1 family. As to quaternary structure, homodimer. Mg(2+) serves as cofactor.

The protein localises to the plastid. It localises to the chloroplast. It carries out the reaction D-sedoheptulose 1,7-bisphosphate + H2O = D-sedoheptulose 7-phosphate + phosphate. It functions in the pathway carbohydrate biosynthesis; Calvin cycle. This chain is Sedoheptulose-1,7-bisphosphatase, chloroplastic (CSBP), found in Chlamydomonas reinhardtii (Chlamydomonas smithii).